The sequence spans 573 residues: ATP-dependent RNA helicase RhlB (573 aa).

Positions 9–37 match the Q motif motif; sequence VTFSSFDLHPALIAGLESAGFTRCTPIQA. The 181-residue stretch at 40–220 folds into the Helicase ATP-binding domain; sequence LPVALPGGDV…YEHMNEPEKL (181 aa). Residue 53–60 coordinates ATP; sequence AQTGTGKT. The DEAD box signature appears at 166–169; sequence DEAD. The region spanning 231–393 is the Helicase C-terminal domain; that stretch reads RVRQRIYFPS…PVTSELLTPL (163 aa). The tract at residues 391-560 is disordered; it reads TPLPRAPRVP…KPSGSPSLLS (170 aa). The segment covering 402–411 has biased composition (acidic residues); that stretch reads EGEEADDDAG. The segment covering 419–432 has biased composition (basic and acidic residues); that stretch reads REAREQRAAEEQRR. A compositionally biased stretch (gly residues) spans 435-450; that stretch reads GRSGSGGSRSGSGGGG. A compositionally biased stretch (basic and acidic residues) spans 451–462; the sequence is GRREGAGADGKP. Residues 484–499 are compositionally biased toward low complexity; that stretch reads PVVAAAAGQAPSAGVA. A compositionally biased stretch (basic residues) spans 505–514; sequence PRKRRRRRNG. Residues 541-560 show a composition bias toward low complexity; that stretch reads VVAKPVRAAAKPSGSPSLLS.

Belongs to the DEAD box helicase family. RhlB subfamily. In terms of assembly, component of the RNA degradosome, which is a multiprotein complex involved in RNA processing and mRNA degradation.

The protein localises to the cytoplasm. It catalyses the reaction ATP + H2O = ADP + phosphate + H(+). Functionally, DEAD-box RNA helicase involved in RNA degradation. Has RNA-dependent ATPase activity and unwinds double-stranded RNA. The polypeptide is ATP-dependent RNA helicase RhlB (Xanthomonas euvesicatoria pv. vesicatoria (strain 85-10) (Xanthomonas campestris pv. vesicatoria)).